The sequence spans 839 residues: uncharacterized protein (839 aa).

3 disordered regions span residues 504–611, 627–646, and 682–839; these read TVSP…NVVN, KNNNSSSNDNEYKNSNDNHC, and NHNY…SLGS. The span at 509–611 shows a compositional bias: low complexity; it reads GNNNVTGDVD…EGSNNCNVVN (103 aa). The segment covering 636–646 has biased composition (basic and acidic residues); the sequence is NEYKNSNDNHC. Composition is skewed to low complexity over residues 689–704 and 713–753; these read NGNNENDCKNNNNNNN and QQQP…NNNK. The stretch at 726–764 forms a coiled coil; the sequence is QQSQQQPQLQQKKQQIQEEQQNLNNNNKSIEDDEEAFNS. The segment covering 765-776 has biased composition (basic and acidic residues); the sequence is DDEHDHEDDSIR. Residues 809-823 are compositionally biased toward acidic residues; sequence EDNDDDSDISDSDSD.

This is an uncharacterized protein from Dictyostelium discoideum (Social amoeba).